A 365-amino-acid chain; its full sequence is Cobalt-precorrin-5B C(1)-methyltransferase (365 aa).

Belongs to the CbiD family.

It catalyses the reaction Co-precorrin-5B + S-adenosyl-L-methionine = Co-precorrin-6A + S-adenosyl-L-homocysteine. Its pathway is cofactor biosynthesis; adenosylcobalamin biosynthesis; cob(II)yrinate a,c-diamide from sirohydrochlorin (anaerobic route): step 6/10. In terms of biological role, catalyzes the methylation of C-1 in cobalt-precorrin-5B to form cobalt-precorrin-6A. The protein is Cobalt-precorrin-5B C(1)-methyltransferase of Methanococcus maripaludis (strain C6 / ATCC BAA-1332).